The chain runs to 388 residues: 3-amino-5-hydroxybenzoate synthase (388 aa).

Position 188 is an N6-(pyridoxal phosphate)lysine (Lys-188).

The protein belongs to the degT/dnrJ/eryC1 family. Homodimer. Can interact with RifL. The cofactor is pyridoxal 5'-phosphate.

It carries out the reaction 5-deoxy-5-amino-3-dehydroshikimate = 3-amino-5-hydroxybenzoate + H2O + H(+). It catalyses the reaction UDP-3-oxo-alpha-D-glucose + L-glutamine = UDP-alpha-D-kanosamine + 2-oxoglutaramate. The protein operates within antibiotic biosynthesis; rifamycin B biosynthesis. With respect to regulation, AHBA synthase activity is activated by 3-deoxy-D-arabinoheptulosonic acid 7-phosphate (DAHP), an intermediate in the shikimate pathway, and is irreversibly inhibited by gabaculine (5-amino-1,3-cyclohexadiene-1-carboxylate). Functionally, catalyzes the dehydration and aromatization of 5-amino-5-deoxy-3-dehydroshikimate (aminoDHS) to 3-amino-5-hydroxybenzoate (AHBA), a compound that then serves as the starter unit for the assembly of a polyketide during the biosynthesis of rifamycin B and other ansamycin antibiotics. Cannot utilize 5-deoxy-5-amino-3-dehydroquinate (aminoDHQ), 5-deoxy-5-aminoshikimate (aminoSA), quinate, 3-dehydroquinate, or 3-dehydroshikimate (DHS) as substrate. Its function is as follows. In a complex with RifL, RifK may have a second function in the AHBA pathway, acting as a transaminase introducing the nitrogen into the first pathway intermediate, UDP-3-keto-D-glucose, to give UDP-kanosamine. Appears to use glutamine as the nitrogen donor; NH(4)(+) or asparagine are 30% less effective as nitrogen donors and neither glutamate nor aspartate show activity. In Amycolatopsis mediterranei (strain S699) (Nocardia mediterranei), this protein is 3-amino-5-hydroxybenzoate synthase (rifK).